Reading from the N-terminus, the 2282-residue chain is Zonadhesin (2282 aa).

MAM domains are found at residues 1–147 (MFFA…PCGE) and 150–315 (PQCV…TCHV). Topologically, residues 1-2235 (MFFATGRASA…VLLPPKPDTS (2235 aa)) are extracellular. Asn112 and Asn272 each carry an N-linked (GlcNAc...) asparagine glycan. The 26 X approximate heptapeptide repeats (mucin-like domain) stretch occupies residues 315–498 (VPVPPVIPIK…STTTTPSPTT (184 aa)). A compositionally biased stretch (low complexity) spans 333 to 356 (PTVPAEGTTEPPEGTIELPEGTTK). Residues 333–495 (PTVPAEGTTE…TTLSTTTTPS (163 aa)) form a disordered region. The segment covering 360 to 369 (ETTELPEEIT) has biased composition (acidic residues). Positions 379–398 (TEPPTVPTEPPTVPTEPPTV) are enriched in pro residues. Composition is skewed to low complexity over residues 399-420 (PTEK…TSIP) and 427-495 (PTEK…TTPS). Positions 501–550 (CPANAHYESCACPASCKHPKASCKPPCQPGCVCDPGLVFSNNSCIKASSC) constitute a TIL 1 domain. N-linked (GlcNAc...) asparagine glycans are attached at residues Asn541 and Asn569. In terms of domain architecture, VWFC 1 spans 551 to 605 (PCLYNNNNYEPEAEWFSPNCTELCHCWPGGRIECQISQCKTHTKCQLKNGQYECQ). A VWFD 1 domain is found at 610 to 787 (ATCFVYGDPH…WAQDEDKECQ (178 aa)). Cystine bridges form between Cys612-Cys747 and Cys634-Cys786. Residues 881 to 934 (CPPNSRYSLCTSPCPKTCHTGYVGMPCPEQCLEGCECNPGFILSGLECVPSAQC) enclose the TIL 2 domain. Residues 935-990 (GCLDPSRGYFKVGEQWFKSDCKQLCICEGSNQIRCQPWKCGPHEVCSQQSGIYGCH) enclose the VWFC 2 domain. Residues 995-1176 (ATCSASGDPH…LEEGSETGCF (182 aa)) form the VWFD 2 domain. 2 disulfide bridges follow: Cys997–Cys1136 and Cys1019–Cys1175. 6 N-linked (GlcNAc...) asparagine glycosylation sites follow: Asn1141, Asn1259, Asn1270, Asn1355, Asn1467, and Asn1483. The TIL 3 domain maps to 1267 to 1322 (CPPNSSYSPCGSPCPGTCLSLNHPKDCPITLPCVEGCECQNGYILSGTSCVPLNQC). The 57-residue stretch at 1323–1379 (GCTDFEGSYHLVRESWYTDNTCSRLCTCSLHNNITCRQTACKPGQQCWAVDGLLRCR) folds into the VWFC 3 domain. The 181-residue stretch at 1384–1564 (GVCQVTGDSR…KDNNIDPNCQ (181 aa)) folds into the VWFD 3 domain. 2 disulfides stabilise this stretch: Cys1386-Cys1525 and Cys1408-Cys1563. The interval 1561–1588 (PNCQKSQEGKGKPQEEQGPSGSSKKASC) is disordered. Over residues 1577-1586 (QGPSGSSKKA) the composition is skewed to polar residues. Asn1662 is a glycosylation site (N-linked (GlcNAc...) asparagine). The 57-residue stretch at 1670-1726 (CPAYSTYTNCLPSCSPSCFDPDGRCEGARAPSSCAEGCTCQPGYVLSKNKCVAKDQC) folds into the TIL 4 domain. The VWFC 4 domain maps to 1727–1782 (SCRDAQGGSIPSGKSWVSSGCSQKCACTEGSIQCRAFHCPSRSHCKLNSNGNSNCV). A VWFD 4 domain is found at 1787-1963 (DQCSIFGGPH…SWEVKTEDSV (177 aa)). Cys1789 and Cys1926 are joined by a disulfide. Residue Asn1997 is glycosylated (N-linked (GlcNAc...) asparagine). One can recognise a TIL 5 domain in the interval 2076–2129 (CPANTVYQSCMTPCPESCANLAAPRDCEGPCVEGCASLPGYAFSGAQSLPLANC). One can recognise a VWFC 5 domain in the interval 2130 to 2184 (GCTSNGIYYQLGHSFVTADCSQRCTCASSGVLLCEPFSCRPGESCTLGNLTRGCF). N-linked (GlcNAc...) asparagine glycosylation occurs at Asn2178. In terms of domain architecture, EGF-like spans 2185–2221 (RESPCLRNPCQNDGRCREQGTSFTCECEPGYGGHLCT). Disulfide bonds link Cys2189/Cys2200, Cys2194/Cys2209, and Cys2211/Cys2220. A helical transmembrane segment spans residues 2236–2256 (NLVAILLGMLVSLVVTVPVLA). Residues 2257-2282 (RKCVSRKRRRWREKTQSEPRSAPGRR) lie on the Cytoplasmic side of the membrane.

As to quaternary structure, probably forms covalent oligomers.

The protein localises to the cell membrane. Functionally, binds in a species-specific manner to the zona pellucida of the egg. May be involved in gamete recognition and/or signaling. The chain is Zonadhesin (ZAN) from Oryctolagus cuniculus (Rabbit).